The primary structure comprises 332 residues: Fructose-1,6-bisphosphatase class 1 (332 aa).

Glutamate 89, aspartate 110, leucine 112, and aspartate 113 together coordinate Mg(2+). Residues 113-116, asparagine 206, tyrosine 239, 257-259, and lysine 269 each bind substrate; these read DGSS and YLY. Residue glutamate 275 coordinates Mg(2+).

The protein belongs to the FBPase class 1 family. As to quaternary structure, homotetramer. The cofactor is Mg(2+).

It localises to the cytoplasm. The enzyme catalyses beta-D-fructose 1,6-bisphosphate + H2O = beta-D-fructose 6-phosphate + phosphate. It functions in the pathway carbohydrate biosynthesis; gluconeogenesis. The chain is Fructose-1,6-bisphosphatase class 1 from Salmonella typhi.